The following is a 229-amino-acid chain: uncharacterized protein (229 aa).

The segment at 61–229 is disordered; the sequence is MQAEDKVSKP…TESEDKPKRG (169 aa). Basic and acidic residues predominate over residues 109–128; it reads QQEKQQPEKAVVEQQEKQQP. The segment covering 166-194 has biased composition (low complexity); it reads QPEQPERQQQAQPERQQQAQPERQQQAQP. Acidic residues predominate over residues 195–204; the sequence is EEAEDAEQEP. Positions 218-229 are enriched in basic and acidic residues; it reads TQTESEDKPKRG.

This is an uncharacterized protein from Frog virus 3 (isolate Goorha) (FV-3).